The following is a 37-amino-acid chain: Large ribosomal subunit protein bL36c (37 aa).

In terms of assembly, component of the chloroplast large ribosomal subunit (LSU). Mature 70S chloroplast ribosomes of higher plants consist of a small (30S) and a large (50S) subunit. The 30S small subunit contains 1 molecule of ribosomal RNA (16S rRNA) and 24 different proteins. The 50S large subunit contains 3 rRNA molecules (23S, 5S and 4.5S rRNA) and 33 different proteins.

The protein localises to the plastid. The protein resides in the chloroplast. Component of the chloroplast ribosome (chloro-ribosome), a dedicated translation machinery responsible for the synthesis of chloroplast genome-encoded proteins, including proteins of the transcription and translation machinery and components of the photosynthetic apparatus. The chain is Large ribosomal subunit protein bL36c (rpl36) from Spinacia oleracea (Spinach).